The sequence spans 214 residues: Osteoclast-stimulating factor 1 (214 aa).

The SH3 domain occupies 12–71; the sequence is GQVKVFRALYTFEPRTPDELYFEEGDILYIADMSDTNWWKGTCKGKTGLIPSNYVAEQAE. ANK repeat units lie at residues 72–101, 105–135, and 139–168; these read SIDN…GVNG, AGST…ELNQ, and LGDT…RTDL.

The protein resides in the cytoplasm. Functionally, induces bone resorption, acting probably through a signaling cascade which results in the secretion of factor(s) enhancing osteoclast formation and activity. This Xenopus laevis (African clawed frog) protein is Osteoclast-stimulating factor 1 (ostf1).